The chain runs to 154 residues: Protein X (154 aa).

A mitochondrial targeting sequence region spans residues 68–117 (PCALRFTSARRMETTVNAHRNLPKVLHKRTLGLSAMSTTDLEAYFKDCVF).

It belongs to the orthohepadnavirus protein X family. As to quaternary structure, may form homodimer. May interact with host CEBPA, CFLAR, CREB1, DDB1, E4F1, HBXIP, HSPD1/HSP60, NFKBIA, POLR2E and SMAD4. Interacts with host SMC5-SMC6 complex and induces its degradation. Interacts with host TRPC4AP; leading to prevent ubiquitination of TRPC4AP. Interacts with host PLSCR1; this interaction promotes ubiquitination and degradation of HBx and impairs HBx-mediated cell proliferation. Post-translationally, a fraction may be phosphorylated in insect cells and HepG2 cells, a human hepatoblastoma cell line. Phosphorylated in vitro by host protein kinase C or mitogen-activated protein kinase. N-acetylated in insect cells.

Its subcellular location is the host cytoplasm. The protein resides in the host nucleus. It is found in the host mitochondrion. Multifunctional protein that plays a role in silencing host antiviral defenses and promoting viral transcription. Does not seem to be essential for HBV infection. May be directly involved in development of cirrhosis and liver cancer (hepatocellular carcinoma). Most of cytosolic activities involve modulation of cytosolic calcium. The effect on apoptosis is controversial depending on the cell types in which the studies have been conducted. May induce apoptosis by localizing in mitochondria and causing loss of mitochondrial membrane potential. May also modulate apoptosis by binding host CFLAR, a key regulator of the death-inducing signaling complex (DISC). Promotes viral transcription by using the host E3 ubiquitin ligase DDB1 to target the SMC5-SMC6 complex to proteasomal degradation. This host complex would otherwise bind to viral episomal DNA, and prevents its transcription. Moderately stimulates transcription of many different viral and cellular transcription elements. Promoters and enhancers stimulated by HBx contain DNA binding sites for NF-kappa-B, AP-1, AP-2, c-EBP, ATF/CREB, or the calcium-activated factor NF-AT. This chain is Protein X, found in Homo sapiens (Human).